Here is a 237-residue protein sequence, read N- to C-terminus: MIVFILLSLAAVLQQFVADVNFESESPRRTEKQTEIVDMHNSFRRSVNPTARNMLKMEWYPEAADNAERWAYQCIYDHSANSERVIGGIQCGENIYKSSNPRAWTEIIQSWYDEIQNFEYGVGANPPGSVIGHYTQIVWYKSYRIGCAAAYCPSYPYNYFYVCQYCPTGNMEGLTATPYTSGPTCADCPSHCDDGLCTNPCPITNTFTNCDSLLQQNSCEDSYIKTNCGASCFGQDK.

Residues 1-18 (MIVFILLSLAAVLQQFVA) form the signal peptide. An SCP domain is found at 37 to 165 (VDMHNSFRRS…PYNYFYVCQY (129 aa)). 7 disulfides stabilise this stretch: cysteine 74–cysteine 152, cysteine 91–cysteine 166, cysteine 147–cysteine 163, cysteine 185–cysteine 192, cysteine 188–cysteine 197, cysteine 210–cysteine 228, and cysteine 219–cysteine 232. A ShKT domain is found at 201–237 (CPITNTFTNCDSLLQQNSCEDSYIKTNCGASCFGQDK).

Belongs to the CRISP family. In terms of tissue distribution, expressed by the venom gland.

It localises to the secreted. Functionally, blocks contraction of smooth muscle elicited by high potassium-induced depolarization, but does not block caffeine-stimulated contraction. May target voltage-gated calcium channels on smooth muscle. The protein is Cysteine-rich venom protein ENH2 of Pseudoferania polylepis (Macleay's water snake).